Consider the following 223-residue polypeptide: 7-cyano-7-deazaguanine synthase (223 aa).

15–25 (FSGGQDSTTCL) contacts ATP. Positions 191, 200, 203, and 206 each coordinate Zn(2+).

The protein belongs to the QueC family. In terms of assembly, homodimer. It depends on Zn(2+) as a cofactor.

It carries out the reaction 7-carboxy-7-deazaguanine + NH4(+) + ATP = 7-cyano-7-deazaguanine + ADP + phosphate + H2O + H(+). The protein operates within purine metabolism; 7-cyano-7-deazaguanine biosynthesis. Functionally, catalyzes the ATP-dependent conversion of 7-carboxy-7-deazaguanine (CDG) to 7-cyano-7-deazaguanine (preQ(0)). This is 7-cyano-7-deazaguanine synthase from Staphylococcus saprophyticus subsp. saprophyticus (strain ATCC 15305 / DSM 20229 / NCIMB 8711 / NCTC 7292 / S-41).